Here is a 573-residue protein sequence, read N- to C-terminus: Eukaryotic translation initiation factor 3 subunit D (573 aa).

The interval 111 to 162 (VFTRGGRGQRGARGTERGGRAQLSRGRGGQYGGGYDRGGRSAAGGRGGRRFG) is disordered. The span at 136–156 (GRGGQYGGGYDRGGRSAAGGR) shows a compositional bias: gly residues. Positions 301 to 315 (ALDMVTVNENAVDAP) are RNA gate. The segment at 552–573 (PAGGLDEEEDNGDLGQEEDDEE) is disordered. A compositionally biased stretch (acidic residues) spans 556–573 (LDEEEDNGDLGQEEDDEE).

Belongs to the eIF-3 subunit D family. In terms of assembly, component of the eukaryotic translation initiation factor 3 (eIF-3) complex.

Its subcellular location is the cytoplasm. Functionally, mRNA cap-binding component of the eukaryotic translation initiation factor 3 (eIF-3) complex, which is involved in protein synthesis of a specialized repertoire of mRNAs and, together with other initiation factors, stimulates binding of mRNA and methionyl-tRNAi to the 40S ribosome. The eIF-3 complex specifically targets and initiates translation of a subset of mRNAs involved in cell proliferation. In the eIF-3 complex, eif3d specifically recognizes and binds the 7-methylguanosine cap of a subset of mRNAs. The sequence is that of Eukaryotic translation initiation factor 3 subunit D from Pyricularia oryzae (strain 70-15 / ATCC MYA-4617 / FGSC 8958) (Rice blast fungus).